The chain runs to 465 residues: Na(+)-translocating NADH-quinone reductase subunit A (465 aa).

Belongs to the NqrA family. In terms of assembly, composed of six subunits; NqrA, NqrB, NqrC, NqrD, NqrE and NqrF.

The enzyme catalyses a ubiquinone + n Na(+)(in) + NADH + H(+) = a ubiquinol + n Na(+)(out) + NAD(+). In terms of biological role, NQR complex catalyzes the reduction of ubiquinone-1 to ubiquinol by two successive reactions, coupled with the transport of Na(+) ions from the cytoplasm to the periplasm. NqrA to NqrE are probably involved in the second step, the conversion of ubisemiquinone to ubiquinol. The chain is Na(+)-translocating NADH-quinone reductase subunit A from Chlamydia trachomatis serovar A (strain ATCC VR-571B / DSM 19440 / HAR-13).